The primary structure comprises 89 residues: Small ribosomal subunit protein uS17 (89 aa).

Belongs to the universal ribosomal protein uS17 family. Part of the 30S ribosomal subunit.

One of the primary rRNA binding proteins, it binds specifically to the 5'-end of 16S ribosomal RNA. This Xylella fastidiosa (strain Temecula1 / ATCC 700964) protein is Small ribosomal subunit protein uS17.